Consider the following 174-residue polypeptide: Methionine-R-sulfoxide reductase B2, mitochondrial (174 aa).

A mitochondrion-targeting transit peptide spans 1 to 61 (MARLLRALRG…PEQFYVTREK (61 aa)). Residues 62 to 172 (GTEAPFSGMY…NSVALKFKPS (111 aa)) enclose the MsrB domain. 4 residues coordinate Zn(2+): C82, C85, C138, and C141. The active-site Nucleophile is the C161.

It belongs to the MsrB Met sulfoxide reductase family. It depends on Zn(2+) as a cofactor.

It localises to the mitochondrion. The catalysed reaction is L-methionyl-[protein] + [thioredoxin]-disulfide + H2O = L-methionyl-(R)-S-oxide-[protein] + [thioredoxin]-dithiol. It catalyses the reaction [thioredoxin]-disulfide + L-methionine + H2O = L-methionine (R)-S-oxide + [thioredoxin]-dithiol. In terms of biological role, methionine-sulfoxide reductase that specifically reduces methionine (R)-sulfoxide back to methionine. While in many cases, methionine oxidation is the result of random oxidation following oxidative stress, methionine oxidation is also a post-translational modification that takes place on specific residue. Upon oxidative stress, may play a role in the preservation of mitochondrial integrity by decreasing the intracellular reactive oxygen species build-up through its scavenging role, hence contributing to cell survival and protein maintenance. This Rattus norvegicus (Rat) protein is Methionine-R-sulfoxide reductase B2, mitochondrial (Msrb2).